A 396-amino-acid chain; its full sequence is Elongation factor Tu (396 aa).

The tr-type G domain occupies 10–205 (KPHVNIGTIG…AVDESIPDPV (196 aa)). The G1 stretch occupies residues 19–26 (GHVDHGKT). 19–26 (GHVDHGKT) is a binding site for GTP. Thr26 contributes to the Mg(2+) binding site. The G2 stretch occupies residues 62 to 66 (GITIN). The tract at residues 83–86 (DAPG) is G3. GTP is bound by residues 83–87 (DAPGH) and 138–141 (NKAD). Residues 138 to 141 (NKAD) form a G4 region. A G5 region spans residues 175 to 177 (SAL).

This sequence belongs to the TRAFAC class translation factor GTPase superfamily. Classic translation factor GTPase family. EF-Tu/EF-1A subfamily. In terms of assembly, monomer.

The protein resides in the cytoplasm. The catalysed reaction is GTP + H2O = GDP + phosphate + H(+). Functionally, GTP hydrolase that promotes the GTP-dependent binding of aminoacyl-tRNA to the A-site of ribosomes during protein biosynthesis. In Mycobacterium bovis (strain ATCC BAA-935 / AF2122/97), this protein is Elongation factor Tu.